The sequence spans 295 residues: ATP synthase gamma chain (295 aa).

Belongs to the ATPase gamma chain family. As to quaternary structure, F-type ATPases have 2 components, CF(1) - the catalytic core - and CF(0) - the membrane proton channel. CF(1) has five subunits: alpha(3), beta(3), gamma(1), delta(1), epsilon(1). CF(0) has three main subunits: a, b and c.

The protein resides in the cell inner membrane. Its function is as follows. Produces ATP from ADP in the presence of a proton gradient across the membrane. The gamma chain is believed to be important in regulating ATPase activity and the flow of protons through the CF(0) complex. This chain is ATP synthase gamma chain, found in Cytophaga hutchinsonii (strain ATCC 33406 / DSM 1761 / CIP 103989 / NBRC 15051 / NCIMB 9469 / D465).